Reading from the N-terminus, the 57-residue chain is Large ribosomal subunit protein bL32 (57 aa).

This sequence belongs to the bacterial ribosomal protein bL32 family.

The sequence is that of Large ribosomal subunit protein bL32 from Bacillus licheniformis (strain ATCC 14580 / DSM 13 / JCM 2505 / CCUG 7422 / NBRC 12200 / NCIMB 9375 / NCTC 10341 / NRRL NRS-1264 / Gibson 46).